A 231-amino-acid polypeptide reads, in one-letter code: 5'-methylthioadenosine/S-adenosylhomocysteine nucleosidase (231 aa).

E12 acts as the Proton acceptor in catalysis. Substrate is bound by residues G78, M153, and 174–175 (ME). D198 (proton donor) is an active-site residue.

Belongs to the PNP/UDP phosphorylase family. MtnN subfamily.

It carries out the reaction S-adenosyl-L-homocysteine + H2O = S-(5-deoxy-D-ribos-5-yl)-L-homocysteine + adenine. The catalysed reaction is S-methyl-5'-thioadenosine + H2O = 5-(methylsulfanyl)-D-ribose + adenine. It catalyses the reaction 5'-deoxyadenosine + H2O = 5-deoxy-D-ribose + adenine. It functions in the pathway amino-acid biosynthesis; L-methionine biosynthesis via salvage pathway; S-methyl-5-thio-alpha-D-ribose 1-phosphate from S-methyl-5'-thioadenosine (hydrolase route): step 1/2. Its function is as follows. Catalyzes the irreversible cleavage of the glycosidic bond in both 5'-methylthioadenosine (MTA) and S-adenosylhomocysteine (SAH/AdoHcy) to adenine and the corresponding thioribose, 5'-methylthioribose and S-ribosylhomocysteine, respectively. Also cleaves 5'-deoxyadenosine, a toxic by-product of radical S-adenosylmethionine (SAM) enzymes, into 5-deoxyribose and adenine. The polypeptide is 5'-methylthioadenosine/S-adenosylhomocysteine nucleosidase (Bacillus thuringiensis subsp. konkukian (strain 97-27)).